Consider the following 360-residue polypeptide: MKKHNFTAGPCILNDLVLKDAASACLNFAGTGLSVLEVSHRDKEFDAVMLEARNLFKELLDVPEGYEVLFLGGGASLQFYQVPLNLLKKKAAFINTGTWATNAIKQAKIMTQVYGGEVEVLASSEDKNFSYIPKDFVIPEDVDYFHFTTNNTIYGTEIRKDFDTKTRLVADMSSDIFSRPIDVSKYDLIYGGAQKNIGPAGATFVLVKTDVLGQVDRPLPDMLNYQIHIKKDSMFNTPPVFPVYVALQTMKWYKELGGVKVLEKMNLDKAALIYDAIDSSKIFRGTVNPEDRSIMNACFVMKDEYKELEKEFATFAASRGMVGIKGHRSVGGFRASLYNALPIESVQSLVSVMKEFEAKH.

Residue Arg41 participates in L-glutamate binding. Pyridoxal 5'-phosphate-binding positions include 75–76 (AS), Trp99, Thr152, Asp171, and Gln194. Residue Lys195 is modified to N6-(pyridoxal phosphate)lysine. 236 to 237 (NT) serves as a coordination point for pyridoxal 5'-phosphate.

It belongs to the class-V pyridoxal-phosphate-dependent aminotransferase family. SerC subfamily. As to quaternary structure, homodimer. It depends on pyridoxal 5'-phosphate as a cofactor.

It is found in the cytoplasm. The enzyme catalyses O-phospho-L-serine + 2-oxoglutarate = 3-phosphooxypyruvate + L-glutamate. The catalysed reaction is 4-(phosphooxy)-L-threonine + 2-oxoglutarate = (R)-3-hydroxy-2-oxo-4-phosphooxybutanoate + L-glutamate. Its pathway is amino-acid biosynthesis; L-serine biosynthesis; L-serine from 3-phospho-D-glycerate: step 2/3. The protein operates within cofactor biosynthesis; pyridoxine 5'-phosphate biosynthesis; pyridoxine 5'-phosphate from D-erythrose 4-phosphate: step 3/5. Functionally, catalyzes the reversible conversion of 3-phosphohydroxypyruvate to phosphoserine and of 3-hydroxy-2-oxo-4-phosphonooxybutanoate to phosphohydroxythreonine. The sequence is that of Phosphoserine aminotransferase from Porphyromonas gingivalis (strain ATCC 33277 / DSM 20709 / CIP 103683 / JCM 12257 / NCTC 11834 / 2561).